The following is a 172-amino-acid chain: Scytalone dehydratase-like protein Arp1 (172 aa).

A substrate-binding site is contributed by tyrosine 49. Catalysis depends on residues histidine 84 and histidine 109. Residue asparagine 130 participates in substrate binding.

The protein belongs to the scytalone dehydratase family. Homotrimer. Each subunit contains an active site, located in the central part of the hydrophobic core of the monomer, which functions independently.

Scytalone dehydratase-like protein; part of the Pks2 gene cluster that mediates the formation of infectious structures (appressoria), enabling these fungi to kill insects faster. The product of the Pks2 gene cluster is different from the one of Pks1 and has still not been identified. The protein is Scytalone dehydratase-like protein Arp1 of Metarhizium robertsii (strain ARSEF 23 / ATCC MYA-3075) (Metarhizium anisopliae (strain ARSEF 23)).